We begin with the raw amino-acid sequence, 400 residues long: Phosphoglycerate kinase (400 aa).

Residues 24-26, Arg39, 62-65, Arg121, and Arg154 each bind substrate; these read DFN and HFGR. ATP-binding positions include Lys205, Gly296, Glu327, and 356 to 359; that span reads GGDS.

The protein belongs to the phosphoglycerate kinase family. In terms of assembly, monomer.

It is found in the cytoplasm. The catalysed reaction is (2R)-3-phosphoglycerate + ATP = (2R)-3-phospho-glyceroyl phosphate + ADP. The protein operates within carbohydrate degradation; glycolysis; pyruvate from D-glyceraldehyde 3-phosphate: step 2/5. This Rippkaea orientalis (strain PCC 8801 / RF-1) (Cyanothece sp. (strain PCC 8801)) protein is Phosphoglycerate kinase.